The sequence spans 551 residues: Chaperonin GroEL 4 (551 aa).

ATP contacts are provided by residues 30–33 (TLGP), Lys51, 87–91 (DGTTT), Gly415, and Asp495.

This sequence belongs to the chaperonin (HSP60) family. As to quaternary structure, forms a cylinder of 14 subunits composed of two heptameric rings stacked back-to-back. Interacts with the co-chaperonin GroES.

The protein resides in the cytoplasm. The catalysed reaction is ATP + H2O + a folded polypeptide = ADP + phosphate + an unfolded polypeptide.. Functionally, together with its co-chaperonin GroES, plays an essential role in assisting protein folding. The GroEL-GroES system forms a nano-cage that allows encapsulation of the non-native substrate proteins and provides a physical environment optimized to promote and accelerate protein folding. The chain is Chaperonin GroEL 4 from Mesorhizobium japonicum (strain LMG 29417 / CECT 9101 / MAFF 303099) (Mesorhizobium loti (strain MAFF 303099)).